The sequence spans 264 residues: Claudin-18 (264 aa).

Residues 1-6 are Cytoplasmic-facing; that stretch reads MATTTC. Residues 7-27 traverse the membrane as a helical segment; it reads QVVGLLLSLLGLAGCIAATGM. Residues 28–80 lie on the Extracellular side of the membrane; sequence DMWSTQDLYDNPVTAVFQYEGLWRSCVQQSSGFTECRPYFTILGLPAMLQAVR. The chain crosses the membrane as a helical span at residues 81–101; that stretch reads ALMIVGIVLGVIGILVSIFAL. Topologically, residues 102–122 are cytoplasmic; it reads KCIRIGSMDDSAKAKMTLTSG. The helical transmembrane segment at 123-143 threads the bilayer; the sequence is ILFIISGICAIIGVSVFANML. Residues 144–176 are Extracellular-facing; the sequence is VTNFWMSTANMYSGMGGMGGMVQTVQTRYTFGA. Residues 177-197 form a helical membrane-spanning segment; it reads ALFVGWVAGGLTLIGGVMMCI. At 198–264 the chain is on the cytoplasmic side; that stretch reads ACRGLTPDDS…QSHPTKYDYV (67 aa). The segment at 198–264 is required for role in regulation of RANKL-induced osteoclast differentiation; it reads ACRGLTPDDS…QSHPTKYDYV (67 aa). Ser-217 carries the post-translational modification Phosphoserine. The disordered stretch occupies residues 241–264; the sequence is KKIYDGGARTEDDEQSHPTKYDYV. Residues 242 to 264 show a composition bias toward basic and acidic residues; it reads KIYDGGARTEDDEQSHPTKYDYV.

It belongs to the claudin family. Interacts with TJP2/ZO-2. Interacts with TJP1/ZO-1. Interacts with YAP1 (phosphorylated); the interaction sequesters YAP1 away from the nucleus and thereby restricts transcription of YAP1 target genes. As to quaternary structure, interacts with CLDN19. As to expression, expressed in the lung (at protein level). Expressed in lung. Expressed in the stomach. In terms of tissue distribution, expressed in lung. As to expression, expressed in stomach. Expressed in bone. Expressed in stomach.

It localises to the cell junction. It is found in the tight junction. The protein resides in the cell membrane. The protein localises to the lateral cell membrane. Involved in alveolar fluid homeostasis via regulation of alveolar epithelial tight junction composition and therefore ion transport and solute permeability, potentially via downstream regulation of the actin cytoskeleton organization and beta-2-adrenergic signaling. Required for lung alveolarization and maintenance of the paracellular alveolar epithelial barrier. Acts to maintain epithelial progenitor cell proliferation and organ size, via regulation of YAP1 localization away from the nucleus and thereby restriction of YAP1 target gene transcription. Acts as a negative regulator of RANKL-induced osteoclast differentiation, potentially via relocation of TJP2/ZO-2 away from the nucleus, subsequently involved in bone resorption in response to calcium deficiency. Mediates the osteoprotective effects of estrogen, potentially via acting downstream of estrogen signaling independently of RANKL signaling pathways. Its function is as follows. Involved in the maintenance of homeostasis of the alveolar microenvironment via regulation of pH and subsequent T-cell activation in the alveolar space, is therefore indirectly involved in limiting C.neoformans infection. Functionally, required for the formation of the gastric paracellular barrier via its role in tight junction formation, thereby involved in the response to gastric acidification. The protein is Claudin-18 (Cldn18) of Mus musculus (Mouse).